The primary structure comprises 241 residues: Tetraspanin-1 (241 aa).

The next 3 helical transmembrane spans lie at 12–32 (ILFN…GIWV), 53–73 (FVNV…LGFL), and 89–109 (FFSI…VALV). N-linked (GlcNAc...) asparagine glycosylation is present at N154. A helical membrane pass occupies residues 212–232 (AVTVGGVAVGVAALELAAMVV).

This sequence belongs to the tetraspanin (TM4SF) family. As to quaternary structure, interacts with SLC19A2. Interacts with NTRK1/TRKA.

Its subcellular location is the cell membrane. It is found in the lysosome membrane. Structural component of specialized membrane microdomains known as tetraspanin-enriched microdomains (TERMs), which act as platforms for receptor clustering and signaling. Participates thereby in diverse biological functions such as cell signal transduction, adhesion, migration and protein trafficking. Regulates neuronal differentiation in response to NGF by facilitating NGF-mediated activation of NTRK1/TRKA receptor tyrosine kinase and subsequent downstream signaling pathways. Plays a role in the inhibition of TNFalpha-induced apoptosis. Mechanistically, inhibits the NF-kappa-B signaling pathway by blocking phosphorylation of CHUK. Also promotes the stability of the thiamine transporter 1/SLC19A2 in intestinal epithelial cells leading to an increase of thiamine uptake process. The chain is Tetraspanin-1 (Tspan1) from Rattus norvegicus (Rat).